Consider the following 90-residue polypeptide: N(2)-fixation sustaining protein CowN (90 aa).

The protein belongs to the CowN family.

Its function is as follows. Is required to sustain N(2)-dependent growth in the presence of low levels of carbon monoxide (CO). Probably acts by protecting the N(2) fixation ability of the nitrogenase complex, which is inactivated in the presence of CO. The chain is N(2)-fixation sustaining protein CowN from Methylocella silvestris (strain DSM 15510 / CIP 108128 / LMG 27833 / NCIMB 13906 / BL2).